Consider the following 359-residue polypeptide: Epoxide hydrolase 4 (359 aa).

The chain crosses the membrane as a helical; Signal-anchor for type II membrane protein span at residues 15-35 (ALLYWSLVYGYCGLCASVHLL). One can recognise an AB hydrolase-1 domain in the interval 92 to 337 (PLMLLLHGFP…ILSEGSHWLQ (246 aa)). Catalysis depends on Asp-167, which acts as the Nucleophile. Residue Tyr-279 is the Proton donor of the active site. The active-site Proton acceptor is His-334.

Belongs to the AB hydrolase superfamily. Epoxide hydrolase family.

The protein localises to the membrane. This is Epoxide hydrolase 4 (Ephx4) from Mus musculus (Mouse).